We begin with the raw amino-acid sequence, 428 residues long: MLDPKFLRNELAVTAERLATRGFILDVAHLTQLEEKRKSLQVATEELQAARNAISKSIGQAKARGEDVDAIMAQVGDLGSQVDAKKLELAAVLEEVNAIAMSMPNLPDESAPIGADETQNVEVRRWGTPRSFDFPIKDHIDLGEGLNGLDFKSAVKITGSRFIVMKGQIARLNRALGQFMLDLHTTEHGYTEAYVPLLVNEASLLGTGQLPKFGEDLFHTKPATEEGQGLSLIPTAEVPLTNLVRDSIVDEDELPIKLTAHTACFRSEAGSYGKDTRGLIRQHQFDKVELVQLVKPEDSMAALETLTNHAETVLQRLGLPYRTVVLCTGDMGFGSSKTYDIEVWLPGQNTYREISSCSNMKDFQARRMQARYRVKADNKPALLHTLNGSGLAVGRTLVAILENYQNADGSVTIPEALRSYMGGLTQIG.

235–237 contacts L-serine; sequence TAE. 266–268 is an ATP binding site; it reads RSE. Residue glutamate 289 participates in L-serine binding. 353–356 is an ATP binding site; it reads EISS. Serine 389 serves as a coordination point for L-serine.

This sequence belongs to the class-II aminoacyl-tRNA synthetase family. Type-1 seryl-tRNA synthetase subfamily. Homodimer. The tRNA molecule binds across the dimer.

Its subcellular location is the cytoplasm. It carries out the reaction tRNA(Ser) + L-serine + ATP = L-seryl-tRNA(Ser) + AMP + diphosphate + H(+). It catalyses the reaction tRNA(Sec) + L-serine + ATP = L-seryl-tRNA(Sec) + AMP + diphosphate + H(+). It functions in the pathway aminoacyl-tRNA biosynthesis; selenocysteinyl-tRNA(Sec) biosynthesis; L-seryl-tRNA(Sec) from L-serine and tRNA(Sec): step 1/1. Its function is as follows. Catalyzes the attachment of serine to tRNA(Ser). Is also able to aminoacylate tRNA(Sec) with serine, to form the misacylated tRNA L-seryl-tRNA(Sec), which will be further converted into selenocysteinyl-tRNA(Sec). The polypeptide is Serine--tRNA ligase (Shewanella sp. (strain W3-18-1)).